We begin with the raw amino-acid sequence, 307 residues long: MNGKIWVLGDAVVDLLPDGEGRLLQCPGGAPANVAVGVARLGGDSGFIGRVGDDPFGRFMRHTLAQEQVDVNYMRLDAAQRTSTVVVDLDSHGERTFTFMVRPSADLFLQPEDLPPFAAGQWLHVCSIALSAEPSRSTTFAALEAIKRAGGYVSFDPNIRSDLWQDPQDLRDCLDRALALADAIKLSEEELAFISGSDDIVSGIARLNARFQPTLLLVTQGKAGVQAALRGQVSHFPARPVVAVDTTGAGDAFVAGLLAGLAAHGIPDNLAALAPDLALAQTCGALATTAKGAMTALPYKDDLQRSL.

This sequence belongs to the carbohydrate kinase PfkB family.

It catalyses the reaction D-fructose + ATP = D-fructose 6-phosphate + ADP + H(+). Its function is as follows. Involved in sucrose metabolism. The polypeptide is Fructokinase (scrK) (Klebsiella pneumoniae).